Consider the following 320-residue polypeptide: Fructose-1,6-bisphosphatase class 1 (320 aa).

Glu84, Asp103, Leu105, and Asp106 together coordinate Mg(2+). Residues 106–109, Asn196, and Lys262 each bind substrate; that span reads DGSS. Glu268 lines the Mg(2+) pocket.

Belongs to the FBPase class 1 family. As to quaternary structure, homotetramer. The cofactor is Mg(2+).

The protein resides in the cytoplasm. The catalysed reaction is beta-D-fructose 1,6-bisphosphate + H2O = beta-D-fructose 6-phosphate + phosphate. Its pathway is carbohydrate biosynthesis; gluconeogenesis. This chain is Fructose-1,6-bisphosphatase class 1, found in Shewanella amazonensis (strain ATCC BAA-1098 / SB2B).